We begin with the raw amino-acid sequence, 83 residues long: High-potential iron-sulfur protein (83 aa).

Residues Cys-43, Cys-46, Cys-61, and Cys-75 each contribute to the [4Fe-4S] cluster site.

This sequence belongs to the high-potential iron-sulfur protein (HiPIP) family. As to quaternary structure, homodimer.

The protein resides in the periplasm. Functionally, specific class of high-redox-potential 4Fe-4S ferredoxins. Functions in anaerobic electron transport in most purple and in some other photosynthetic bacteria and in at least one genus (Paracoccus) of halophilic, denitrifying bacteria. The chain is High-potential iron-sulfur protein from Thiocystis violacea.